Consider the following 454-residue polypeptide: Putative F-box/LRR-repeat protein At3g58880 (454 aa).

Residues 2–48 (VDLVSSLPDDLLGHILSLLTTKEAALTSILSKRWRYLIAFVPYLEFD) enclose the F-box domain. LRR repeat units follow at residues 77–102 (LALHGDSPIRKFSLKCKTGVDLDLLN), 144–168 (SGCRIAFGPEHISALPMLKTLTLDS), 169–194 (VSWSDSGQLERLLSACPALEALNLAN), 214–240 (IKSVSLSGPAHVFSFDTPNLLCLNYTA), 270–301 (LVSVRKNGLLMLSEVQKLIRGISSVRKLYLSP), 303–327 (TLQVLGQCSQAMPVFNNLTFLVIES), and 328–353 (SMDIRWQAMPVLLKNCPRLETLVIKG).

In Arabidopsis thaliana (Mouse-ear cress), this protein is Putative F-box/LRR-repeat protein At3g58880.